Consider the following 831-residue polypeptide: Heat shock 70 kDa protein 14 (831 aa).

Disordered stretches follow at residues 503–579 (EEVE…KKKV) and 786–831 (TKPK…EGST). Residues 509–526 (VTKEHSEETTKMDSDKAS) show a composition bias toward basic and acidic residues. Residue Ser533 is modified to Phosphoserine.

Belongs to the heat shock protein 70 (TC 1.A.33) family. HSP110/SSE subfamily. In terms of assembly, interacts with HTT1 in both cytoplasm and nucleus. In terms of tissue distribution, constitutively expressed.

It localises to the cytoplasm. It is found in the nucleus. In cooperation with other chaperones, Hsp70s are key components that facilitate folding of de novo synthesized proteins, assist translocation of precursor proteins into organelles, and are responsible for degradation of damaged protein under stress conditions. This Arabidopsis thaliana (Mouse-ear cress) protein is Heat shock 70 kDa protein 14 (HSP70-14).